We begin with the raw amino-acid sequence, 92 residues long: Probable Fe(2+)-trafficking protein (92 aa).

It belongs to the Fe(2+)-trafficking protein family.

Its function is as follows. Could be a mediator in iron transactions between iron acquisition and iron-requiring processes, such as synthesis and/or repair of Fe-S clusters in biosynthetic enzymes. This chain is Probable Fe(2+)-trafficking protein, found in Xanthomonas oryzae pv. oryzae (strain MAFF 311018).